The sequence spans 157 residues: MQRVGSSLPSGSQSASQCPSVAFTERNQVATLPVQRLTEDAAAVRDNVHTEDGFQMKLYAHGFTPEELLVQVNSGCLVVTGQRQLEGCNPDGTGFRVAQKVHQQMSLPPDLDPAAMTCCLTPSGQLCVRGQCRALPPSEAQTGPASRFRSRGSKKLA.

A compositionally biased stretch (low complexity) spans 1–17; it reads MQRVGSSLPSGSQSASQ. Disordered stretches follow at residues 1–20 and 136–157; these read MQRV…QCPS and PPSE…KKLA. A sHSP domain is found at 35-148; sequence QRLTEDAAAV…EAQTGPASRF (114 aa). Over residues 148–157 the composition is skewed to basic residues; the sequence is FRSRGSKKLA.

This sequence belongs to the small heat shock protein (HSP20) family.

The protein resides in the cytoplasm. It is found in the nucleus. This is Heat shock protein beta-9 (HSPB9) from Bos taurus (Bovine).